Consider the following 189-residue polypeptide: Elongation factor P (189 aa).

The protein belongs to the elongation factor P family.

The protein resides in the cytoplasm. Its pathway is protein biosynthesis; polypeptide chain elongation. Its function is as follows. Involved in peptide bond synthesis. Stimulates efficient translation and peptide-bond synthesis on native or reconstituted 70S ribosomes in vitro. Probably functions indirectly by altering the affinity of the ribosome for aminoacyl-tRNA, thus increasing their reactivity as acceptors for peptidyl transferase. This Orientia tsutsugamushi (strain Boryong) (Rickettsia tsutsugamushi) protein is Elongation factor P.